Reading from the N-terminus, the 192-residue chain is A-type ATP synthase subunit E (192 aa).

It belongs to the V-ATPase E subunit family. As to quaternary structure, has multiple subunits with at least A(3), B(3), C, D, E, F, H, I and proteolipid K(x).

It is found in the cell membrane. Its function is as follows. Component of the A-type ATP synthase that produces ATP from ADP in the presence of a proton gradient across the membrane. The chain is A-type ATP synthase subunit E from Halorubrum lacusprofundi (strain ATCC 49239 / DSM 5036 / JCM 8891 / ACAM 34).